Reading from the N-terminus, the 226-residue chain is 2-C-methyl-D-erythritol 4-phosphate cytidylyltransferase (226 aa).

It belongs to the IspD/TarI cytidylyltransferase family. IspD subfamily.

It catalyses the reaction 2-C-methyl-D-erythritol 4-phosphate + CTP + H(+) = 4-CDP-2-C-methyl-D-erythritol + diphosphate. It functions in the pathway isoprenoid biosynthesis; isopentenyl diphosphate biosynthesis via DXP pathway; isopentenyl diphosphate from 1-deoxy-D-xylulose 5-phosphate: step 2/6. Functionally, catalyzes the formation of 4-diphosphocytidyl-2-C-methyl-D-erythritol from CTP and 2-C-methyl-D-erythritol 4-phosphate (MEP). The sequence is that of 2-C-methyl-D-erythritol 4-phosphate cytidylyltransferase from Thermosipho africanus (strain TCF52B).